Reading from the N-terminus, the 649-residue chain is Arylsulfatase (649 aa).

Positions 1 to 22 (MLQRLVVALCLLGFAALTAAAA) are cleaved as a signal peptide. Ca(2+)-binding residues include Asp-34 and Asp-35. Asn-41 is a glycosylation site (N-linked (GlcNAc...) asparagine). Cys-72 lines the Ca(2+) pocket. Cys-72 acts as the Nucleophile in catalysis. Cys-72 carries the post-translational modification 3-oxoalanine (Cys). N-linked (GlcNAc...) asparagine glycosylation is found at Asn-89, Asn-224, and Asn-279. Ca(2+) is bound by residues Asp-324 and Asn-325. 3 N-linked (GlcNAc...) asparagine glycosylation sites follow: Asn-445, Asn-489, and Asn-531.

This sequence belongs to the sulfatase family. The cofactor is Ca(2+). In terms of processing, the conversion to 3-oxoalanine (also known as C-formylglycine, FGly), of a serine or cysteine residue in prokaryotes and of a cysteine residue in eukaryotes, is critical for catalytic activity.

It localises to the periplasm. It carries out the reaction an aryl sulfate + H2O = a phenol + sulfate + H(+). Inhibited by Na(3)BO(3) and KCN. No inhibition by sodium dodecyl sulfate, even at high concentration. Functionally, is commonly produced by soil microorganisms and plays an important role in the mineralization of sulfates. This Volvox carteri (Green alga) protein is Arylsulfatase.